A 471-amino-acid chain; its full sequence is Collagenase 3 (471 aa).

Positions 1–19 (MQPGVLAACLLLSWTHCWS) are cleaved as a signal peptide. A propeptide spans 20–103 (LPLLNSNEDD…PRCGVPDVGE (84 aa)) (activation peptide). Residues 94 to 101 (PRCGVPDV) carry the Cysteine switch motif. Cysteine 96 provides a ligand contact to Zn(2+). N-linked (GlcNAc...) asparagine glycosylation occurs at asparagine 117. Residue aspartate 128 coordinates Ca(2+). N-linked (GlcNAc...) asparagine glycosylation is found at asparagine 152 and asparagine 158. Ca(2+) is bound at residue aspartate 162. Positions 172 and 174 each coordinate Zn(2+). Residues 176-246 (YPFDGPSGLL…GALMFPIYTY (71 aa)) form an interaction with TIMP2 region. Residues aspartate 179, glycine 180, serine 182, and leucine 184 each coordinate Ca(2+). Histidine 187 is a Zn(2+) binding site. Residues asparagine 194, glycine 196, and aspartate 198 each coordinate Ca(2+). A Zn(2+)-binding site is contributed by histidine 200. The Ca(2+) site is built by aspartate 202, aspartate 203, and glutamate 205. A Zn(2+)-binding site is contributed by histidine 222. Glutamate 223 is an active-site residue. 3 residues coordinate Zn(2+): histidine 226, histidine 232, and methionine 240. The disordered stretch occupies residues 263–284 (QSLYGPGDEDPNPKHPKTPDKC). The interaction with collagen stretch occupies residues 268–471 (PGDEDPNPKH…VMPTNSLLWC (204 aa)). Residues 273 to 284 (PNPKHPKTPDKC) show a composition bias toward basic and acidic residues. 4 Hemopexin repeats span residues 281–330 (PDKC…WPEL), 331–377 (PNRI…GFPR), 379–427 (VKKI…FPGI), and 428–471 (GGKV…LLWC). A disulfide bond links cysteine 284 and cysteine 471. The Ca(2+) site is built by aspartate 291, isoleucine 293, aspartate 335, and alanine 337. Residue tyrosine 366 is modified to Phosphotyrosine; by PKDCC. Ca(2+)-binding residues include serine 383 and alanine 385. An N-linked (GlcNAc...) asparagine glycan is attached at asparagine 409. Positions 432 and 434 each coordinate Ca(2+).

This sequence belongs to the peptidase M10A family. Requires Ca(2+) as cofactor. Zn(2+) is required as a cofactor. The proenzyme is activated by removal of the propeptide; this cleavage can be effected by other matrix metalloproteinases, such as MMP2, MMP3 and MMP14 and may involve several cleavage steps. Cleavage can also be autocatalytic, after partial maturation by another protease or after treatment with 4-aminophenylmercuric acetate (APMA) (in vitro). In terms of processing, N-glycosylated. Post-translationally, tyrosine phosphorylated by PKDCC/VLK.

The protein resides in the secreted. It is found in the extracellular space. The protein localises to the extracellular matrix. Functionally, plays a role in the degradation of extracellular matrix proteins including fibrillar collagen, fibronectin, TNC and ACAN. Cleaves triple helical collagens, including type I, type II and type III collagen, but has the highest activity with soluble type II collagen. Can also degrade collagen type IV, type XIV and type X. May also function by activating or degrading key regulatory proteins, such as TGFB1 and CCN2. Plays a role in wound healing, tissue remodeling, cartilage degradation, bone development, bone mineralization and ossification. Required for normal embryonic bone development and ossification. Plays a role in the healing of bone fractures via endochondral ossification. Plays a role in wound healing, probably by a mechanism that involves proteolytic activation of TGFB1 and degradation of CCN2. Plays a role in keratinocyte migration during wound healing. May play a role in cell migration and in tumor cell invasion. This is Collagenase 3 (MMP13) from Oryctolagus cuniculus (Rabbit).